A 445-amino-acid polypeptide reads, in one-letter code: MSGIDTIWEKVLANIKHRLAPASYDTWFKETKIKVLNNHQVVIQAPTSFISEWLQTNYIDFIQEAFIEEIGEKLNIKVISSEDELMNNEKEAPVRKTQQTSQELLPNQLNTDNTFDTFVIGSGNRFSHAASLAVAEAPAKAYNPLFIYGGVGLGKTHLMHAIGHYVMEHKENAKVVYISSEKFMNEFINSIKDNKTEEFRSKYRNVDVLLIDDIQFLAGKESTQEEFFHTFNELHQNHKQIVISSDRAPKEIPTLEERLRTRFEWGLITDVTPPDLETRIAILRKKSEEENIDIPNEAMLYIATQIQSNIRELEGALTRVSAYSKLVNRELNSDLVAEALKDIIATSKPKKVTIKDIQLAVGEYYNVRLEDFSAKKRTKSIAFPRQIAMYLARELTDFSLPKIGEEFGGRDHTTVIHAHEKIKNQLETDESLKNELKNIEKDITS.

The domain I, interacts with DnaA modulators stretch occupies residues M1–E72. Residues E72–N107 form a domain II region. The segment at Q108–S324 is domain III, AAA+ region. ATP is bound by residues G152, G154, K155, and T156. A domain IV, binds dsDNA region spans residues K325–S445.

The protein belongs to the DnaA family. In terms of assembly, oligomerizes as a right-handed, spiral filament on DNA at oriC.

It is found in the cytoplasm. Functionally, plays an essential role in the initiation and regulation of chromosomal replication. ATP-DnaA binds to the origin of replication (oriC) to initiate formation of the DNA replication initiation complex once per cell cycle. Binds the DnaA box (a 9 base pair repeat at the origin) and separates the double-stranded (ds)DNA. Forms a right-handed helical filament on oriC DNA; dsDNA binds to the exterior of the filament while single-stranded (ss)DNA is stabiized in the filament's interior. The ATP-DnaA-oriC complex binds and stabilizes one strand of the AT-rich DNA unwinding element (DUE), permitting loading of DNA polymerase. After initiation quickly degrades to an ADP-DnaA complex that is not apt for DNA replication. Binds acidic phospholipids. The sequence is that of Chromosomal replication initiator protein DnaA from Macrococcus caseolyticus (strain JCSC5402) (Macrococcoides caseolyticum).